A 336-amino-acid polypeptide reads, in one-letter code: Dihydroorotate dehydrogenase (quinone) (336 aa).

FMN contacts are provided by residues Ala-62–Lys-66 and Thr-86. Lys-66 contributes to the substrate binding site. A substrate-binding site is contributed by Asn-111–Phe-115. FMN is bound by residues Asn-139 and Asn-172. Position 172 (Asn-172) interacts with substrate. The active-site Nucleophile is Ser-175. Residue Asn-177 participates in substrate binding. FMN contacts are provided by Lys-217 and Thr-245. Asn-246–Thr-247 contributes to the substrate binding site. FMN contacts are provided by residues Gly-268, Gly-297, and Tyr-318–Ser-319.

This sequence belongs to the dihydroorotate dehydrogenase family. Type 2 subfamily. Monomer. The cofactor is FMN.

The protein resides in the cell membrane. It catalyses the reaction (S)-dihydroorotate + a quinone = orotate + a quinol. Its pathway is pyrimidine metabolism; UMP biosynthesis via de novo pathway; orotate from (S)-dihydroorotate (quinone route): step 1/1. Catalyzes the conversion of dihydroorotate to orotate with quinone as electron acceptor. The sequence is that of Dihydroorotate dehydrogenase (quinone) from Aeromonas salmonicida (strain A449).